The sequence spans 363 residues: Protein-glutamate methylesterase/protein-glutamine glutaminase of group 3 operon (363 aa).

Residues 7-124 (RVLIVDDSAS…RQALLECSTR (118 aa)) enclose the Response regulatory domain. A 4-aspartylphosphate modification is found at Asp-58. Positions 166–357 (PTTERIVCIG…REIMLWYQAG (192 aa)) constitute a CheB-type methylesterase domain. Active-site residues include Ser-177, His-203, and Asp-299.

This sequence belongs to the CheB family. Post-translationally, phosphorylated by CheA. Phosphorylation of the N-terminal regulatory domain activates the methylesterase activity.

Its subcellular location is the cytoplasm. The enzyme catalyses [protein]-L-glutamate 5-O-methyl ester + H2O = L-glutamyl-[protein] + methanol + H(+). It carries out the reaction L-glutaminyl-[protein] + H2O = L-glutamyl-[protein] + NH4(+). Its function is as follows. Involved in chemotaxis. Part of a chemotaxis signal transduction system that modulates chemotaxis in response to various stimuli. Catalyzes the demethylation of specific methylglutamate residues introduced into the chemoreceptors (methyl-accepting chemotaxis proteins or MCP) by CheR. Also mediates the irreversible deamidation of specific glutamine residues to glutamic acid. The polypeptide is Protein-glutamate methylesterase/protein-glutamine glutaminase of group 3 operon (Bradyrhizobium diazoefficiens (strain JCM 10833 / BCRC 13528 / IAM 13628 / NBRC 14792 / USDA 110)).